The chain runs to 286 residues: 4-diphosphocytidyl-2-C-methyl-D-erythritol kinase (286 aa).

The active site involves Lys11. 93 to 103 (PFGAGLGGGSS) lines the ATP pocket. Residue Asp135 is part of the active site.

Belongs to the GHMP kinase family. IspE subfamily.

It catalyses the reaction 4-CDP-2-C-methyl-D-erythritol + ATP = 4-CDP-2-C-methyl-D-erythritol 2-phosphate + ADP + H(+). The protein operates within isoprenoid biosynthesis; isopentenyl diphosphate biosynthesis via DXP pathway; isopentenyl diphosphate from 1-deoxy-D-xylulose 5-phosphate: step 3/6. In terms of biological role, catalyzes the phosphorylation of the position 2 hydroxy group of 4-diphosphocytidyl-2C-methyl-D-erythritol. In Prosthecochloris aestuarii (strain DSM 271 / SK 413), this protein is 4-diphosphocytidyl-2-C-methyl-D-erythritol kinase.